We begin with the raw amino-acid sequence, 271 residues long: Calretinin (271 aa).

EF-hand domains follow at residues 16–51 (LTAS…LEKA), 63–98 (NFGE…EENF), 107–142 (GSSA…LLKK), 151–186 (KLQE…QENF), 195–230 (LTSE…LYEK), and 235–270 (MNIQ…SEPP). 25 residues coordinate Ca(2+): Asp-29, Asp-31, Asn-33, Tyr-35, Glu-40, Asp-76, Asn-78, Asp-80, Lys-82, Glu-87, Asp-120, Asp-122, Ser-124, Tyr-126, Glu-131, Asp-164, Asn-166, Asp-168, Lys-170, Glu-175, Asp-208, Asp-210, Ser-212, Tyr-214, and Glu-219. Residue Tyr-214 is modified to Phosphotyrosine.

It belongs to the calbindin family.

It localises to the synapse. The protein resides in the cell projection. The protein localises to the dendrite. Calcium-binding protein involved in calcium homeostasis and signal transduction. It plays a critical role in buffering intracellular calcium levels and modulating calcium-dependent signaling pathways. Predominantly expressed in specific neuronal populations, influences synaptic plasticity and neuronal excitability, contributing to learning and memory. During embryonic development, it facilitates neuronal differentiation and maturation. The protein is Calretinin (Calb2) of Rattus norvegicus (Rat).